A 435-amino-acid polypeptide reads, in one-letter code: Glutamine synthetase (435 aa).

Residues 12-94 form the GS beta-grasp domain; sequence KGVKYFMISY…VAADCIMDDA (83 aa). Positions 100–435 constitute a GS catalytic domain; it reads PRVVLKKLVA…EWEHQTTLDV (336 aa). Mg(2+)-binding residues include E123, E125, E180, and E187. Residue G232 participates in L-glutamate binding. Residue H236 coordinates Mg(2+). S240 contributes to the ATP binding site. Residues R291 and R315 each contribute to the L-glutamate site. Residues R315 and R320 each coordinate ATP. A Mg(2+)-binding site is contributed by E328. R330 contacts L-glutamate.

This sequence belongs to the glutamine synthetase family. As to quaternary structure, homooctamer. Mg(2+) serves as cofactor.

It carries out the reaction L-glutamate + NH4(+) + ATP = L-glutamine + ADP + phosphate + H(+). Its activity is regulated as follows. Inhibited by methionine sulfoximine, ADP and pyrophosphate, but not by various nitrogen-containing metabolites that inhibit other GS enzymes. Catalyzes the ATP-dependent biosynthesis of glutamine from glutamate and ammonia. In Rhizobium meliloti (strain 1021) (Ensifer meliloti), this protein is Glutamine synthetase.